Reading from the N-terminus, the 411-residue chain is MRSQPHVLSIVLAGGEGKRLFPFTADRAKPAVPFGGSYRLIDFVLSNLVNAGYMKVCVLTQYKSHSLDRHISQSWQLSGLAGEYITPVPAQQRLGKRWFTGSADAILQSLNLIYDEDPEYIIVFGADHVYRMDPEQMVKEHIESGAACSVAGIRVPRKEATAFGCIQADDDGTITEFLEKPADPPATPDDPDVTFASMGNYVFTTQALIDALKEDSEDENSAHDMGGNIIPYFVNRGEAHVHDFSRNVVPGETDRDHGYWRDVGTVDAFYEAHMDLISVYPVFNLYNRKWPIHTSDDSNLPPAKFVKGGIAQSSIVAAGCIISAGTVRNSVLGPGVVVEEGASVEGCVLMDGVRIGKGAVVRHAILDKNVRVGDNALIGVDRARDSERFTLSQGGVVCVPKNYELHGADED.

Alpha-D-glucose 1-phosphate-binding positions include glycine 164, 179–180 (EK), and serine 197.

It belongs to the bacterial/plant glucose-1-phosphate adenylyltransferase family. In terms of assembly, homotetramer.

It carries out the reaction alpha-D-glucose 1-phosphate + ATP + H(+) = ADP-alpha-D-glucose + diphosphate. The protein operates within glycan biosynthesis; glycogen biosynthesis. Its function is as follows. Involved in the biosynthesis of ADP-glucose, a building block required for the elongation reactions to produce glycogen. Catalyzes the reaction between ATP and alpha-D-glucose 1-phosphate (G1P) to produce pyrophosphate and ADP-Glc. This is Glucose-1-phosphate adenylyltransferase from Corynebacterium kroppenstedtii (strain DSM 44385 / JCM 11950 / CIP 105744 / CCUG 35717).